Reading from the N-terminus, the 199-residue chain is Charged multivesicular body protein 1b (199 aa).

A coiled-coil region spans residues 26-48; the sequence is DKEEKAEKAKIKKAIQKGNMEVA. Positions 132-156 are interaction with IST1; that stretch reads MEDTMSSTTTLTTPQGQVDMLLQEM. The tract at residues 167–199 is disordered; that stretch reads ELPQGQTGSVGTSVASAEQDELSQRLARLRDQV. Residues 170–182 are compositionally biased toward polar residues; that stretch reads QGQTGSVGTSVAS. The segment at 174–199 is interaction with SPAST; it reads GSVGTSVASAEQDELSQRLARLRDQV. Positions 178-199 form a coiled coil; it reads TSVASAEQDELSQRLARLRDQV. The tract at residues 180–196 is interaction with VPS4A, MITD1 and STAMBP; the sequence is VASAEQDELSQRLARLR. The segment at 180 to 199 is interaction with VTA1; it reads VASAEQDELSQRLARLRDQV. Residues 183 to 199 form an interaction with VPS4B region; sequence AEQDELSQRLARLRDQV. The short motif at 186–196 is the MIT-interacting motif element; it reads DELSQRLARLR.

Belongs to the SNF7 family. In terms of assembly, probable peripherally associated component of the endosomal sorting required for transport complex III (ESCRT-III). ESCRT-III components are thought to multimerize to form a flat lattice on the perimeter membrane of the endosome. Several assembly forms of ESCRT-III may exist that interact and act sequentially. Interacts with CHMP1A. Interacts with VTA1; the interaction probably involves the open conformation of CHMP1B. Interacts with CHMP2A. Interacts with VPS4A; the interaction is direct. Interacts with VPS4B; the interaction is direct. Interacts with SPAST (via MIT domain); the interaction is direct. Interacts with IST1. Interacts with MITD1. Interacts with STAMBP.

It localises to the cytoplasm. The protein localises to the cytosol. Its subcellular location is the endosome. The protein resides in the late endosome membrane. In terms of biological role, probable peripherally associated component of the endosomal sorting required for transport complex III (ESCRT-III) which is involved in multivesicular bodies (MVBs) formation and sorting of endosomal cargo proteins into MVBs. MVBs contain intraluminal vesicles (ILVs) that are generated by invagination and scission from the limiting membrane of the endosome and mostly are delivered to lysosomes enabling degradation of membrane proteins, such as stimulated growth factor receptors, lysosomal enzymes and lipids. The MVB pathway appears to require the sequential function of ESCRT-O, -I,-II and -III complexes. ESCRT-III proteins mostly dissociate from the invaginating membrane before the ILV is released. The ESCRT machinery also functions in topologically equivalent membrane fission events, such as the terminal stages of cytokinesis and the budding of enveloped viruses (lentiviruses). ESCRT-III proteins are believed to mediate the necessary vesicle extrusion and/or membrane fission activities, possibly in conjunction with the AAA ATPase VPS4. Involved in cytokinesis. Involved in recruiting VPS4A and/or VPS4B and SPAST to the midbody of dividing cells. The protein is Charged multivesicular body protein 1b (CHMP1B) of Bos taurus (Bovine).